The primary structure comprises 92 residues: Ribonuclease P protein component 1 (92 aa).

Belongs to the eukaryotic/archaeal RNase P protein component 1 family. Consists of a catalytic RNA component and at least 4-5 protein subunits.

The protein resides in the cytoplasm. The catalysed reaction is Endonucleolytic cleavage of RNA, removing 5'-extranucleotides from tRNA precursor.. Its function is as follows. Part of ribonuclease P, a protein complex that generates mature tRNA molecules by cleaving their 5'-ends. This is Ribonuclease P protein component 1 from Staphylothermus marinus (strain ATCC 43588 / DSM 3639 / JCM 9404 / F1).